We begin with the raw amino-acid sequence, 428 residues long: Gamma-glutamyl phosphate reductase (428 aa).

The protein belongs to the gamma-glutamyl phosphate reductase family.

Its subcellular location is the cytoplasm. It catalyses the reaction L-glutamate 5-semialdehyde + phosphate + NADP(+) = L-glutamyl 5-phosphate + NADPH + H(+). Its pathway is amino-acid biosynthesis; L-proline biosynthesis; L-glutamate 5-semialdehyde from L-glutamate: step 2/2. Catalyzes the NADPH-dependent reduction of L-glutamate 5-phosphate into L-glutamate 5-semialdehyde and phosphate. The product spontaneously undergoes cyclization to form 1-pyrroline-5-carboxylate. The sequence is that of Gamma-glutamyl phosphate reductase from Streptomyces coelicolor (strain ATCC BAA-471 / A3(2) / M145).